Consider the following 431-residue polypeptide: 5-methylthioadenosine/S-adenosylhomocysteine deaminase (431 aa).

2 residues coordinate Zn(2+): His-61 and His-63. Positions 90 and 183 each coordinate substrate. Position 210 (His-210) interacts with Zn(2+). Substrate contacts are provided by Glu-213 and Asp-298. Position 298 (Asp-298) interacts with Zn(2+).

This sequence belongs to the metallo-dependent hydrolases superfamily. MTA/SAH deaminase family. Zn(2+) serves as cofactor.

The enzyme catalyses S-adenosyl-L-homocysteine + H2O + H(+) = S-inosyl-L-homocysteine + NH4(+). The catalysed reaction is S-methyl-5'-thioadenosine + H2O + H(+) = S-methyl-5'-thioinosine + NH4(+). In terms of biological role, catalyzes the deamination of 5-methylthioadenosine and S-adenosyl-L-homocysteine into 5-methylthioinosine and S-inosyl-L-homocysteine, respectively. Is also able to deaminate adenosine. This Halobacterium salinarum (strain ATCC 700922 / JCM 11081 / NRC-1) (Halobacterium halobium) protein is 5-methylthioadenosine/S-adenosylhomocysteine deaminase.